The sequence spans 149 residues: Large ribosomal subunit protein bL9 (149 aa).

It belongs to the bacterial ribosomal protein bL9 family. In terms of assembly, part of the 50S ribosomal subunit. In stalled/collided disomes (pairs of ribosomes where the leading ribosome is stalled and a second ribosome has collided with it), bL9 in the collided ribosome contacts bS6 and uL2, while it contacts only helices of the 16S rRNA in the stalled ribosome; the inter-ribosome bridge thus formed is different from that formed between normally translating ribosomes.

Binds to the 23S rRNA. This chain is Large ribosomal subunit protein bL9, found in Bacillus subtilis (strain 168).